The chain runs to 227 residues: Phosphoribosylformylglycinamidine synthase subunit PurQ (227 aa).

Residues 3–225 (FAVIVLPGSN…VKNWRDTHVT (223 aa)) enclose the Glutamine amidotransferase type-1 domain. Cysteine 86 (nucleophile) is an active-site residue. Active-site residues include histidine 194 and glutamate 196.

In terms of assembly, part of the FGAM synthase complex composed of 1 PurL, 1 PurQ and 2 PurS subunits.

It is found in the cytoplasm. It catalyses the reaction N(2)-formyl-N(1)-(5-phospho-beta-D-ribosyl)glycinamide + L-glutamine + ATP + H2O = 2-formamido-N(1)-(5-O-phospho-beta-D-ribosyl)acetamidine + L-glutamate + ADP + phosphate + H(+). The catalysed reaction is L-glutamine + H2O = L-glutamate + NH4(+). It functions in the pathway purine metabolism; IMP biosynthesis via de novo pathway; 5-amino-1-(5-phospho-D-ribosyl)imidazole from N(2)-formyl-N(1)-(5-phospho-D-ribosyl)glycinamide: step 1/2. Part of the phosphoribosylformylglycinamidine synthase complex involved in the purines biosynthetic pathway. Catalyzes the ATP-dependent conversion of formylglycinamide ribonucleotide (FGAR) and glutamine to yield formylglycinamidine ribonucleotide (FGAM) and glutamate. The FGAM synthase complex is composed of three subunits. PurQ produces an ammonia molecule by converting glutamine to glutamate. PurL transfers the ammonia molecule to FGAR to form FGAM in an ATP-dependent manner. PurS interacts with PurQ and PurL and is thought to assist in the transfer of the ammonia molecule from PurQ to PurL. The protein is Phosphoribosylformylglycinamidine synthase subunit PurQ of Bacillus pumilus (strain SAFR-032).